We begin with the raw amino-acid sequence, 374 residues long: GTPase Obg (374 aa).

Residues 1–159 form the Obg domain; sequence MKFIDEVRIH…RDLRLELRLL (159 aa). The region spanning 160–333 is the OBG-type G domain; that stretch reads ADVGLLGLPN…LVYAIWQALP (174 aa). GTP contacts are provided by residues 166 to 173, 191 to 195, 213 to 216, 283 to 286, and 314 to 316; these read GLPNAGKS, FTTLY, DIPG, NKSD, and SAA. Residues S173 and T193 each coordinate Mg(2+). Residues 337–374 are disordered; it reads PAADPTQTEDWGDESDAGERLENWEGDDLDADWEEEQV. The span at 360-374 shows a compositional bias: acidic residues; sequence WEGDDLDADWEEEQV.

Belongs to the TRAFAC class OBG-HflX-like GTPase superfamily. OBG GTPase family. In terms of assembly, monomer. Mg(2+) is required as a cofactor.

Its subcellular location is the cytoplasm. In terms of biological role, an essential GTPase which binds GTP, GDP and possibly (p)ppGpp with moderate affinity, with high nucleotide exchange rates and a fairly low GTP hydrolysis rate. Plays a role in control of the cell cycle, stress response, ribosome biogenesis and in those bacteria that undergo differentiation, in morphogenesis control. The polypeptide is GTPase Obg (Acidithiobacillus ferrooxidans (strain ATCC 23270 / DSM 14882 / CIP 104768 / NCIMB 8455) (Ferrobacillus ferrooxidans (strain ATCC 23270))).